Consider the following 79-residue polypeptide: Ribonuclease P protein component 1 (79 aa).

The protein belongs to the eukaryotic/archaeal RNase P protein component 1 family. Consists of a catalytic RNA component and at least 4-5 protein subunits.

Its subcellular location is the cytoplasm. The catalysed reaction is Endonucleolytic cleavage of RNA, removing 5'-extranucleotides from tRNA precursor.. Functionally, part of ribonuclease P, a protein complex that generates mature tRNA molecules by cleaving their 5'-ends. The polypeptide is Ribonuclease P protein component 1 (Saccharolobus solfataricus (strain ATCC 35092 / DSM 1617 / JCM 11322 / P2) (Sulfolobus solfataricus)).